The following is a 346-amino-acid chain: Dehydrogenase orf1 (346 aa).

Position 43–48 (43–48 (VDYATQ)) interacts with NADP(+). Position 133 to 140 (133 to 140 (LAFSTAIV)) interacts with substrate. NADP(+) contacts are provided by residues 170 to 173 (ATSV), 193 to 196 (SPHN), tyrosine 211, and 251 to 252 (LN). Substrate is bound at residue 269–273 (APPNV). Residue 336–337 (VS) coordinates NADP(+).

This sequence belongs to the zinc-containing alcohol dehydrogenase family.

The protein operates within secondary metabolite biosynthesis. In terms of biological role, dehydrogenase; part of the gene cluster that mediates the biosynthesis of nigerpyrone and its derivatives carbonarone A and pestalamide A. The biosynthesis pathway begins with the polyketide assembly by epaA to form phenylacetyl triketide precursor from successive condensation of two malonyl-CoA, presumably with one phenylacetyl-CoA starter unit produced by the phenylacetyl-CoA ligase epaB. For the nigerpyrone biosynthesis, the reactive polyketide chain is released as an aldehyde through the R-domain. A nonenzymatic cyclization and dehydration may create nigerpyrone. For the biosynthesis of carbonarone A and pestalamide A, an extra methyl group is added through the C-methyltransferase domain. Several further steps involving the dehydrogenase orf1, the cytochrome P450 monooxygenase orf2 and the FAD-dependent monooxygenase orf3 are required to form a carbonarone A precursor which is converted to carbonarone A via cyclization. The O-acetyltransferase epaC could catalyze the transfer of 2-methylsuccinyl-CoA, a common intermediate in the ethylmalonyl-CoA pathway, to generate the final product pestalamide A. This chain is Dehydrogenase orf1, found in Aspergillus niger (strain ATCC MYA-4892 / CBS 513.88 / FGSC A1513).